The following is a 522-amino-acid chain: Gypsy retrotransposon integrase-like protein 1 (522 aa).

The region spanning 135-292 is the Integrase catalytic domain; it reads KVENPWSLVT…TPYFQMFSRN (158 aa). S502 carries the phosphoserine modification.

Widely expressed. Also found in tumors originating from parathyroid gland, colon, stomach, bladder, uterus and prostate.

The chain is Gypsy retrotransposon integrase-like protein 1 (GIN1) from Homo sapiens (Human).